The chain runs to 278 residues: Acyl-[acyl-carrier-protein]--UDP-N-acetylglucosamine O-acyltransferase (278 aa).

This sequence belongs to the transferase hexapeptide repeat family. LpxA subfamily. In terms of assembly, homotrimer.

The protein resides in the cytoplasm. It carries out the reaction a (3R)-hydroxyacyl-[ACP] + UDP-N-acetyl-alpha-D-glucosamine = a UDP-3-O-[(3R)-3-hydroxyacyl]-N-acetyl-alpha-D-glucosamine + holo-[ACP]. It participates in glycolipid biosynthesis; lipid IV(A) biosynthesis; lipid IV(A) from (3R)-3-hydroxytetradecanoyl-[acyl-carrier-protein] and UDP-N-acetyl-alpha-D-glucosamine: step 1/6. Functionally, involved in the biosynthesis of lipid A, a phosphorylated glycolipid that anchors the lipopolysaccharide to the outer membrane of the cell. This is Acyl-[acyl-carrier-protein]--UDP-N-acetylglucosamine O-acyltransferase from Brucella anthropi (strain ATCC 49188 / DSM 6882 / CCUG 24695 / JCM 21032 / LMG 3331 / NBRC 15819 / NCTC 12168 / Alc 37) (Ochrobactrum anthropi).